A 737-amino-acid chain; its full sequence is Procollagen-lysine,2-oxoglutarate 5-dioxygenase 2 (737 aa).

An N-terminal signal peptide occupies residues 1–25; the sequence is MGGCTVKPQLLLLALVLHPWNPCLG. N-linked (GlcNAc...) asparagine glycosylation is found at N63, N209, and N297. T320 carries the phosphothreonine modification. Phosphotyrosine is present on Y323. 2 N-linked (GlcNAc...) asparagine glycosylation sites follow: N365 and N522. Residues 644–737 form the Fe2OG dioxygenase domain; the sequence is KGFALLNFVV…RYIAVSFIDP (94 aa). 2 residues coordinate Fe cation: H666 and D668. A glycan (N-linked (GlcNAc...) asparagine) is linked at N696. At K704 the chain carries N6-succinyllysine. Position 718 (H718) interacts with Fe cation. An N-linked (GlcNAc...) asparagine glycan is attached at N725. Residue R728 is part of the active site.

In terms of assembly, homodimer. It depends on Fe(2+) as a cofactor. L-ascorbate is required as a cofactor. As to expression, highly expressed in pancreas and muscle. Isoform 1 and isoform 2 are expressed in the majority of the examined cell types. Isoform 2 is specifically expressed in skin, lung, dura and aorta.

The protein resides in the rough endoplasmic reticulum membrane. It carries out the reaction L-lysyl-[collagen] + 2-oxoglutarate + O2 = (5R)-5-hydroxy-L-lysyl-[collagen] + succinate + CO2. Forms hydroxylysine residues in -Xaa-Lys-Gly- sequences in collagens. These hydroxylysines serve as sites of attachment for carbohydrate units and are essential for the stability of the intermolecular collagen cross-links. This chain is Procollagen-lysine,2-oxoglutarate 5-dioxygenase 2, found in Homo sapiens (Human).